Here is a 188-residue protein sequence, read N- to C-terminus: MKKIGVLALQGAVDEHIQMIESAGALAFKVKHSNDLAGLDGLVLPGGESTTMRKIMKRYDLMEPVKAFAKEGKAIFGTCAGLVLLSKEIEGGEESLGLLEATAIRNGFGRQKESFEAELTVEVFDDSPFEAVFIRAPYLIEPSDEVSVLATVENRIVAAKQANILVTAFHPELTNDNRLMKYFLEKMV.

47–49 (GES) serves as a coordination point for L-glutamine. Cys-79 functions as the Nucleophile in the catalytic mechanism. L-glutamine contacts are provided by residues Arg-105 and 134-135 (IR). Residues His-170 and Glu-172 each act as charge relay system in the active site.

The protein belongs to the glutaminase PdxT/SNO family. In the presence of PdxS, forms a dodecamer of heterodimers. Only shows activity in the heterodimer.

The enzyme catalyses aldehydo-D-ribose 5-phosphate + D-glyceraldehyde 3-phosphate + L-glutamine = pyridoxal 5'-phosphate + L-glutamate + phosphate + 3 H2O + H(+). It catalyses the reaction L-glutamine + H2O = L-glutamate + NH4(+). It participates in cofactor biosynthesis; pyridoxal 5'-phosphate biosynthesis. Functionally, catalyzes the hydrolysis of glutamine to glutamate and ammonia as part of the biosynthesis of pyridoxal 5'-phosphate. The resulting ammonia molecule is channeled to the active site of PdxS. In Listeria innocua serovar 6a (strain ATCC BAA-680 / CLIP 11262), this protein is Pyridoxal 5'-phosphate synthase subunit PdxT.